The sequence spans 379 residues: Chaperone protein DnaJ (379 aa).

The 66-residue stretch at 5 to 70 (DYYELLEVSR…QKRAAYDQFG (66 aa)) folds into the J domain. A CR-type zinc finger spans residues 135–213 (GKEVEITVPR…CHGQGRVRES (79 aa)). Zn(2+) is bound by residues cysteine 148, cysteine 151, cysteine 165, cysteine 168, cysteine 187, cysteine 190, cysteine 201, and cysteine 204. 4 CXXCXGXG motif repeats span residues 148 to 155 (CTVCEGSG), 165 to 172 (CETCQGMG), 187 to 194 (CPTCHGEG), and 201 to 208 (CASCHGQG).

It belongs to the DnaJ family. In terms of assembly, homodimer. Zn(2+) is required as a cofactor.

Its subcellular location is the cytoplasm. In terms of biological role, participates actively in the response to hyperosmotic and heat shock by preventing the aggregation of stress-denatured proteins and by disaggregating proteins, also in an autonomous, DnaK-independent fashion. Unfolded proteins bind initially to DnaJ; upon interaction with the DnaJ-bound protein, DnaK hydrolyzes its bound ATP, resulting in the formation of a stable complex. GrpE releases ADP from DnaK; ATP binding to DnaK triggers the release of the substrate protein, thus completing the reaction cycle. Several rounds of ATP-dependent interactions between DnaJ, DnaK and GrpE are required for fully efficient folding. Also involved, together with DnaK and GrpE, in the DNA replication of plasmids through activation of initiation proteins. This chain is Chaperone protein DnaJ, found in Legionella pneumophila (strain Corby).